Reading from the N-terminus, the 1627-residue chain is Adhesin P1 (1627 aa).

The N-terminal stretch at 1 to 59 (MHQTKKTALSKSTWILILTATASLATGLTVVGHFTSTTTTLKRQQFSYTRPDEVALRHT) is a signal peptide. Disordered stretches follow at residues 219–238 (LPQQ…AMFG), 252–355 (NEKL…PWRP), 898–953 (WRND…TTQD), and 1274–1362 (SFGT…TGND). Over residues 224–234 (TESGQNTSTTG) the composition is skewed to polar residues. Over residues 261 to 276 (TGSSTTSGSGQSTQRG) the composition is skewed to low complexity. Residues 282–297 (TKVKALKIEVKKKSDS) are compositionally biased toward basic and acidic residues. Polar residues-rich tracts occupy residues 903 to 933 (ASSG…SAGN), 939 to 953 (QDNI…TTQD), and 1274 to 1297 (SFGT…VFGT). Residues 1307–1320 (SGGGAGGGSSGSGQ) show a composition bias toward gly residues. Residues 1341 to 1352 (STSDGNTSSTNN) are compositionally biased toward low complexity. Residues 1403-1415 (GPQSVKFKSPDQI) form a cytadherence epitope region. Residues 1527-1547 (AITVPIVVIVLSVTLGLAIGI) form a helical membrane-spanning segment. The segment at 1589-1627 (QAPKRLKQTSAAKPGAPRPPVPPKPGAPKPPVQPPKKPA) is disordered. Positions 1604-1627 (APRPPVPPKPGAPKPPVQPPKKPA) are enriched in pro residues.

The protein belongs to the adhesin P1 family.

Its subcellular location is the cell membrane. The protein localises to the cell projection. It localises to the attachment organelle. The protein resides in the cell surface. In terms of biological role, the protein is the major adhesin mediating the attachment of this mycoplasma to respiratory epithelium. This Mycoplasma pneumoniae (strain ATCC 29342 / M129 / Subtype 1) (Mycoplasmoides pneumoniae) protein is Adhesin P1 (mgpA).